Here is a 482-residue protein sequence, read N- to C-terminus: MLNRVDFGGRPFHFIGIGGIGMSALAHVLVKHKLPVSGSDARLNPITEQLQHLGVRIFPQQEATNLLALPQLPQVVCSTAIHADNPEYKMAVELGCPILHRSDLLAALIERYQSIAVAGTHGKTTTSSMIGYLLLQGGVDPTIIIGGEVQAWEGNARTGMGEYLVAEADESDGSLAKFAPQIGVITNIELDHPDHYSNLEQVIKIFETFANHCQTVVACWDCPTIRDRLTVLPDQSVVSYSLFRESGADYSVDQISYGPQGTLAQVWERGELLGELSTKLLGAHNLKNALAAVAVGRLLGLDFITISRGIARFEGARRRFEVRGEAHGIRFVDDYAHHPSEIRATLAAGRLQLKSREEFISPWQRLVAVFQPHRYTRTFTFLTEFSQAFGDADLVVLTDIYSAGERDRLVQGQHLADCMAEYHAQVQYQPSLEEVKLFLKQTLRPGDLVLVLGAGNLNQIIPELLDYYQTLPIETISEVVPL.

119-125 serves as a coordination point for ATP; that stretch reads GTHGKTT.

It belongs to the MurCDEF family.

The protein resides in the cytoplasm. It catalyses the reaction UDP-N-acetyl-alpha-D-muramate + L-alanine + ATP = UDP-N-acetyl-alpha-D-muramoyl-L-alanine + ADP + phosphate + H(+). Its pathway is cell wall biogenesis; peptidoglycan biosynthesis. Its function is as follows. Cell wall formation. This Cyanothece sp. (strain PCC 7425 / ATCC 29141) protein is UDP-N-acetylmuramate--L-alanine ligase.